We begin with the raw amino-acid sequence, 372 residues long: Envelope phospholipase OPG057 (372 aa).

A YPPL motif is present at residues 153–156; it reads YPPL. 2 S-palmitoyl cysteine; by host lipidation sites follow: Cys-185 and Cys-186. The PLD phosphodiesterase domain maps to 307–334; it reads FTIQNNTKLLIVDDEYVHITSANFDGTH.

The protein belongs to the orthopoxvirus OPG057 family. In terms of assembly, interacts with protein OPG190. In terms of processing, palmitoylated. Attachment of the palmitate moiety is essential for correct intracellular targeting and protein function.

The protein resides in the virion membrane. It is found in the host Golgi apparatus. Its subcellular location is the host trans-Golgi network. The protein localises to the host endoplasmic reticulum membrane. The catalysed reaction is a 1,2-diacyl-sn-glycero-3-phosphocholine + H2O = a 1,2-diacyl-sn-glycero-3-phosphate + choline + H(+). In terms of biological role, major envelope protein that plays a role in the biogenesis of the viral double membrane and in egress of virus from the host cell. Produces the wrapped form of virus that is required for cell-to-cell spread. Acts as a lipase with broad specificity including phospholipase C, phospholipase A, and triacylglycerol lipase activities. This chain is Envelope phospholipase OPG057 (OPG057), found in Variola virus (isolate Human/India/Ind3/1967) (VARV).